The primary structure comprises 428 residues: Adenylosuccinate synthetase (428 aa).

Residues Gly-12–Lys-18 and Gly-40–Thr-42 contribute to the GTP site. The Proton acceptor role is filled by Asp-13. Mg(2+)-binding residues include Asp-13 and Gly-40. IMP-binding positions include Asp-13 to Lys-16, Asn-38 to His-41, Thr-130, Arg-144, Gln-225, Thr-240, and Arg-304. His-41 acts as the Proton donor in catalysis. Val-300 to Arg-306 contributes to the substrate binding site. Residues Arg-306, Lys-332–Asp-334, and Gly-414–Gly-416 each bind GTP.

It belongs to the adenylosuccinate synthetase family. In terms of assembly, homodimer. Mg(2+) serves as cofactor.

It is found in the cytoplasm. The enzyme catalyses IMP + L-aspartate + GTP = N(6)-(1,2-dicarboxyethyl)-AMP + GDP + phosphate + 2 H(+). The protein operates within purine metabolism; AMP biosynthesis via de novo pathway; AMP from IMP: step 1/2. Plays an important role in the de novo pathway of purine nucleotide biosynthesis. Catalyzes the first committed step in the biosynthesis of AMP from IMP. This chain is Adenylosuccinate synthetase, found in Clostridium botulinum (strain Eklund 17B / Type B).